We begin with the raw amino-acid sequence, 464 residues long: Glutamate--tRNA ligase (464 aa).

A 'HIGH' region motif is present at residues 9–19; that stretch reads PSPTGYLHIGG. Positions 242–246 match the 'KMSKS' region motif; it reads KISKR. Position 245 (lysine 245) interacts with ATP.

It belongs to the class-I aminoacyl-tRNA synthetase family. Glutamate--tRNA ligase type 1 subfamily. As to quaternary structure, monomer.

It localises to the cytoplasm. The catalysed reaction is tRNA(Glu) + L-glutamate + ATP = L-glutamyl-tRNA(Glu) + AMP + diphosphate. Functionally, catalyzes the attachment of glutamate to tRNA(Glu) in a two-step reaction: glutamate is first activated by ATP to form Glu-AMP and then transferred to the acceptor end of tRNA(Glu). In Neisseria meningitidis serogroup C (strain 053442), this protein is Glutamate--tRNA ligase.